A 306-amino-acid polypeptide reads, in one-letter code: Ethylmalonyl-CoA decarboxylase (306 aa).

K216 is modified (N6-acetyllysine; alternate). Position 216 is an N6-succinyllysine; alternate (K216).

The protein belongs to the enoyl-CoA hydratase/isomerase family.

Its subcellular location is the cytoplasm. The protein localises to the cytosol. The catalysed reaction is (2S)-ethylmalonyl-CoA + H(+) = butanoyl-CoA + CO2. It catalyses the reaction (S)-methylmalonyl-CoA + H(+) = propanoyl-CoA + CO2. It carries out the reaction (2R)-ethylmalonyl-CoA + H(+) = butanoyl-CoA + CO2. Functionally, decarboxylates ethylmalonyl-CoA, a potentially toxic metabolite, to form butyryl-CoA, suggesting it might be involved in metabolite proofreading. Acts preferentially on (S)-ethylmalonyl-CoA but also has some activity on the (R)-isomer. Also has methylmalonyl-CoA decarboxylase activity at lower level. The chain is Ethylmalonyl-CoA decarboxylase (ECHDC1) from Bos taurus (Bovine).